Reading from the N-terminus, the 493-residue chain is Poly(ribitol-phosphate) alpha-N-acetylglucosaminyltransferase (493 aa).

UDP-N-acetyl-alpha-D-glucosamine contacts are provided by residues G17, K59, H249, R326, K331, T383, and 403 to 411 (EGQGLSMIE).

Belongs to the glycosyltransferase group 1 family. In terms of assembly, homotrimer.

It localises to the cytoplasm. The enzyme catalyses 4-O-[(D-ribitylphospho)(n)-di{(2R)-glycerylphospho}]-N-acetyl-beta-D-mannosaminyl-(1-&gt;4)-N-acetyl-alpha-D-glucosaminyl di-trans,octa-cis-undecaprenyl diphosphate + n UDP-N-acetyl-alpha-D-glucosamine = 4-O-([2-N-acetyl-alpha-D-glucosaminyl-1-D-ribitylphospho](n)-di{[2R]-1-glycerylphospho})-N-acetyl-beta-D-mannosaminyl-(1-&gt;4)-N-acetyl-alpha-D-glucosaminyl di-trans,octa-cis-undecaprenyl diphosphate + n UDP + n H(+). The protein operates within cell wall biogenesis; poly(ribitol phosphate) teichoic acid biosynthesis. Functionally, attaches N-acetyl-alpha-D-glucosamine residues to poly(RboP)-wall teichoic acids (WTAs). The chain is Poly(ribitol-phosphate) alpha-N-acetylglucosaminyltransferase from Staphylococcus aureus (strain COL).